The sequence spans 554 residues: Oxygen-dependent choline dehydrogenase (554 aa).

4-33 (DYIIIGAGSAGNVLATRLTEDPNTTVLLLE) serves as a coordination point for FAD. The active-site Proton acceptor is H473.

This sequence belongs to the GMC oxidoreductase family. It depends on FAD as a cofactor.

It catalyses the reaction choline + A = betaine aldehyde + AH2. The enzyme catalyses betaine aldehyde + NAD(+) + H2O = glycine betaine + NADH + 2 H(+). The protein operates within amine and polyamine biosynthesis; betaine biosynthesis via choline pathway; betaine aldehyde from choline (cytochrome c reductase route): step 1/1. Its function is as follows. Involved in the biosynthesis of the osmoprotectant glycine betaine. Catalyzes the oxidation of choline to betaine aldehyde and betaine aldehyde to glycine betaine at the same rate. This is Oxygen-dependent choline dehydrogenase from Klebsiella pneumoniae (strain 342).